The chain runs to 289 residues: Glycine--tRNA ligase alpha subunit (289 aa).

Belongs to the class-II aminoacyl-tRNA synthetase family. Tetramer of two alpha and two beta subunits.

It is found in the cytoplasm. The catalysed reaction is tRNA(Gly) + glycine + ATP = glycyl-tRNA(Gly) + AMP + diphosphate. The protein is Glycine--tRNA ligase alpha subunit of Prochlorococcus marinus subsp. pastoris (strain CCMP1986 / NIES-2087 / MED4).